A 185-amino-acid polypeptide reads, in one-letter code: Ribosome-recycling factor (185 aa).

The protein belongs to the RRF family.

It localises to the cytoplasm. Responsible for the release of ribosomes from messenger RNA at the termination of protein biosynthesis. May increase the efficiency of translation by recycling ribosomes from one round of translation to another. The protein is Ribosome-recycling factor of Marinomonas sp. (strain MWYL1).